A 303-amino-acid chain; its full sequence is Mitochondrial carrier homolog 2 (303 aa).

Ala2 bears the N-acetylalanine mark. Over 2–15 (ADAASQVLLGSGLT) the chain is Mitochondrial intermembrane. Solcar repeat units follow at residues 2-98 (ADAA…YQEC) and 118-206 (DRVI…VNTY). The helical transmembrane segment at 16-36 (ILSQPLMYVKVLIQVGYEPLA) threads the bilayer. The Cytoplasmic segment spans residues 37-77 (PTVGRNIFGRQVCQLPGLFCYAQHIASIDGKRGLFTGLTPR). Residues 78–92 (LCSGVLGTVVHGKVL) form a helical membrane-spanning segment. Topologically, residues 93–135 (QHYQECDKAEESGSGNVQKEVSSSFDRVIKETTREMMARSAAT) are mitochondrial intermembrane. The chain crosses the membrane as a helical span at residues 136 to 156 (LITHPFHVITLRSMVQFIGRE). Over 157–180 (SKYCGLCDSIATIYREEGILGFFA) the chain is Cytoplasmic. The chain crosses the membrane as a helical span at residues 181-199 (GLIPRLLGDIISLWLCNSL). Residues 200–231 (AYLVNTYALDSGVSTMNEMKSYSQAVTGFFAS) are Mitochondrial intermembrane-facing. The chain crosses the membrane as a helical span at residues 232–252 (MLTYPFVLVSNLMAVNNCGLA). At 253-280 (GGCPPYAPIYSSWIDCWCMLQKEGNMSR) the chain is on the cytoplasmic side. A helical transmembrane segment spans residues 281 to 303 (GNSLFFRKVPFGKTYCCDLRMLI).

This sequence belongs to the mitochondrial carrier (TC 2.A.29) family. In terms of assembly, interacts with p15BID.

Its subcellular location is the mitochondrion outer membrane. Functionally, protein insertase that mediates insertion of transmembrane proteins into the mitochondrial outer membrane. Catalyzes insertion of proteins with alpha-helical transmembrane regions, such as signal-anchored, tail-anchored and multi-pass membrane proteins. Does not mediate insertion of beta-barrel transmembrane proteins. Also acts as a receptor for the truncated form of pro-apoptotic BH3-interacting domain death agonist (p15 BID) and has therefore a critical function in apoptosis. Regulates the quiescence/cycling of hematopoietic stem cells (HSCs). Acts as a regulator of mitochondrial fusion, essential for the naive-to-primed interconversion of embryonic stem cells (ESCs). Acts as a regulator of lipid homeostasis and has a regulatory role in adipocyte differentiation and biology. This Bos taurus (Bovine) protein is Mitochondrial carrier homolog 2 (MTCH2).